A 348-amino-acid chain; its full sequence is Fe(3+) ions import ATP-binding protein FbpC (348 aa).

The ABC transporter domain occupies 6–236 (LSLEGATVRF…PADAFVARFL (231 aa)). 38–45 (GPSGSGKS) provides a ligand contact to ATP.

Belongs to the ABC transporter superfamily. Fe(3+) ion importer (TC 3.A.1.10) family. The complex is composed of two ATP-binding proteins (FbpC), two transmembrane proteins (FbpB) and a solute-binding protein (FbpA).

The protein resides in the cell membrane. It catalyses the reaction Fe(3+)(out) + ATP + H2O = Fe(3+)(in) + ADP + phosphate + H(+). In terms of biological role, part of the ABC transporter complex FbpABC involved in Fe(3+) ions import. Responsible for energy coupling to the transport system. This Streptomyces coelicolor (strain ATCC BAA-471 / A3(2) / M145) protein is Fe(3+) ions import ATP-binding protein FbpC.